The sequence spans 220 residues: GTP cyclohydrolase 1 (220 aa).

Positions 113, 116, and 184 each coordinate Zn(2+).

This sequence belongs to the GTP cyclohydrolase I family. Homomer.

It carries out the reaction GTP + H2O = 7,8-dihydroneopterin 3'-triphosphate + formate + H(+). It functions in the pathway cofactor biosynthesis; 7,8-dihydroneopterin triphosphate biosynthesis; 7,8-dihydroneopterin triphosphate from GTP: step 1/1. The chain is GTP cyclohydrolase 1 from Hamiltonella defensa subsp. Acyrthosiphon pisum (strain 5AT).